Here is a 343-residue protein sequence, read N- to C-terminus: 4-hydroxy-2-oxovalerate aldolase 2 (343 aa).

The region spanning 8–260 (ITVHDMSLRD…ETGVDVFAIS (253 aa)) is the Pyruvate carboxyltransferase domain. Residue 16 to 17 (RD) coordinates substrate. A Mn(2+)-binding site is contributed by aspartate 17. Histidine 20 serves as the catalytic Proton acceptor. Substrate contacts are provided by serine 170 and histidine 199. Mn(2+)-binding residues include histidine 199 and histidine 201. Position 290 (tyrosine 290) interacts with substrate.

This sequence belongs to the 4-hydroxy-2-oxovalerate aldolase family.

The enzyme catalyses (S)-4-hydroxy-2-oxopentanoate = acetaldehyde + pyruvate. This chain is 4-hydroxy-2-oxovalerate aldolase 2, found in Burkholderia lata (strain ATCC 17760 / DSM 23089 / LMG 22485 / NCIMB 9086 / R18194 / 383).